We begin with the raw amino-acid sequence, 134 residues long: Putative cytochrome c oxidase subunit 6b-like (134 aa).

The disordered stretch occupies residues 1–61 (MSSAQMDPHD…DSGRETDAAV (61 aa)). Composition is skewed to basic and acidic residues over residues 7–19 (DPHD…DISK) and 44–61 (ATFR…DAAV). The CHCH domain occupies 71–114 (TRHCFNRFMQYHKCIEKNGRDANDCNNLRDYVRSICPEELVSKI). The Cx9C motif signature appears at 74–84 (CFNRFMQYHKC). 2 cysteine pairs are disulfide-bonded: C74-C106 and C84-C95. Residues 95 to 106 (CNNLRDYVRSIC) carry the Cx10C motif motif.

This sequence belongs to the cytochrome c oxidase subunit 6B (TC 3.D.4.8) family.

It localises to the mitochondrion. This protein is one of the nuclear-coded polypeptide chains of cytochrome c oxidase, the terminal oxidase in mitochondrial electron transport. This protein may be one of the heme-binding subunits of the oxidase. This chain is Putative cytochrome c oxidase subunit 6b-like, found in Arabidopsis thaliana (Mouse-ear cress).